The following is a 711-amino-acid chain: Polyribonucleotide nucleotidyltransferase (711 aa).

Mg(2+)-binding residues include aspartate 486 and aspartate 492. The 60-residue stretch at 553 to 612 (PRIHTIKINPDKIKDVIGKGGSVIRALTEETGTTIEIEDDGTVKIAATDGEKAKHAIRRI) folds into the KH domain. The region spanning 622–690 (GRVYTGKVTR…RQGRIRLSIK (69 aa)) is the S1 motif domain. The interval 689-711 (IKEATEQSQPAAAPEAPAAEQGE) is disordered. Low complexity predominate over residues 694–711 (EQSQPAAAPEAPAAEQGE).

It belongs to the polyribonucleotide nucleotidyltransferase family. In terms of assembly, component of the RNA degradosome, which is a multiprotein complex involved in RNA processing and mRNA degradation. Mg(2+) is required as a cofactor.

Its subcellular location is the cytoplasm. It catalyses the reaction RNA(n+1) + phosphate = RNA(n) + a ribonucleoside 5'-diphosphate. In terms of biological role, involved in mRNA degradation. Catalyzes the phosphorolysis of single-stranded polyribonucleotides processively in the 3'- to 5'-direction. The sequence is that of Polyribonucleotide nucleotidyltransferase from Shigella boydii serotype 4 (strain Sb227).